The following is a 174-amino-acid chain: Gamma-crystallin C (174 aa).

Beta/gamma crystallin 'Greek key' domains are found at residues 2-40 and 41-83; these read GKIT…RVDS and GCWM…RLIP. An S-methylcysteine modification is found at Cys23. The tract at residues 84-87 is connecting peptide; that stretch reads HAGS. Beta/gamma crystallin 'Greek key' domains follow at residues 88–128 and 129–171; these read HRMR…QVLE and GCWV…RRVV.

It belongs to the beta/gamma-crystallin family.

In terms of biological role, crystallins are the dominant structural components of the vertebrate eye lens. The sequence is that of Gamma-crystallin C (Crygc) from Mus musculus (Mouse).